Consider the following 198-residue polypeptide: V-type ATP synthase subunit E (198 aa).

This sequence belongs to the V-ATPase E subunit family.

Produces ATP from ADP in the presence of a proton gradient across the membrane. The sequence is that of V-type ATP synthase subunit E from Clostridium novyi (strain NT).